Consider the following 390-residue polypeptide: 23S rRNA (uracil(747)-C(5))-methyltransferase RlmC (390 aa).

The [4Fe-4S] cluster site is built by cysteine 12, cysteine 20, cysteine 23, and cysteine 100. Residues glutamine 225, phenylalanine 254, glutamate 275, and asparagine 322 each coordinate S-adenosyl-L-methionine. Catalysis depends on cysteine 349, which acts as the Nucleophile.

It belongs to the class I-like SAM-binding methyltransferase superfamily. RNA M5U methyltransferase family. RlmC subfamily.

It carries out the reaction uridine(747) in 23S rRNA + S-adenosyl-L-methionine = 5-methyluridine(747) in 23S rRNA + S-adenosyl-L-homocysteine + H(+). Its function is as follows. Catalyzes the formation of 5-methyl-uridine at position 747 (m5U747) in 23S rRNA. The chain is 23S rRNA (uracil(747)-C(5))-methyltransferase RlmC from Shewanella baltica (strain OS155 / ATCC BAA-1091).